A 313-amino-acid polypeptide reads, in one-letter code: Dimethyladenosine transferase (313 aa).

Residues H37, L39, G64, E85, D113, and N128 each contribute to the S-adenosyl-L-methionine site.

It belongs to the class I-like SAM-binding methyltransferase superfamily. rRNA adenine N(6)-methyltransferase family. In terms of assembly, part of the small subunit (SSU) processome, composed of more than 70 proteins and the RNA chaperone small nucleolar RNA (snoRNA) U3.

The protein resides in the nucleus. Its subcellular location is the nucleoplasm. The protein localises to the nucleolus. The enzyme catalyses adenosine(1779)/adenosine(1780) in 18S rRNA + 4 S-adenosyl-L-methionine = N(6)-dimethyladenosine(1779)/N(6)-dimethyladenosine(1780) in 18S rRNA + 4 S-adenosyl-L-homocysteine + 4 H(+). Its function is as follows. Specifically dimethylates two adjacent adenosines in the loop of a conserved hairpin near the 3'-end of 18S rRNA in the 40S particle. Involved in the pre-rRNA processing steps leading to small-subunit rRNA production independently of its RNA-modifying catalytic activity. Part of the small subunit (SSU) processome, first precursor of the small eukaryotic ribosomal subunit. During the assembly of the SSU processome in the nucleolus, many ribosome biogenesis factors, an RNA chaperone and ribosomal proteins associate with the nascent pre-rRNA and work in concert to generate RNA folding, modifications, rearrangements and cleavage as well as targeted degradation of pre-ribosomal RNA by the RNA exosome. This is Dimethyladenosine transferase (Dimt1) from Mus musculus (Mouse).